The primary structure comprises 447 residues: Phosphoglucosamine mutase (447 aa).

The active-site Phosphoserine intermediate is the Ser103. Residues Ser103, Asp242, Asp244, and Asp246 each contribute to the Mg(2+) site. Ser103 carries the post-translational modification Phosphoserine.

This sequence belongs to the phosphohexose mutase family. Mg(2+) is required as a cofactor. Activated by phosphorylation.

It carries out the reaction alpha-D-glucosamine 1-phosphate = D-glucosamine 6-phosphate. Its function is as follows. Catalyzes the conversion of glucosamine-6-phosphate to glucosamine-1-phosphate. The protein is Phosphoglucosamine mutase of Marinobacter nauticus (strain ATCC 700491 / DSM 11845 / VT8) (Marinobacter aquaeolei).